The chain runs to 573 residues: 2-isopropylmalate synthase (573 aa).

The Pyruvate carboxyltransferase domain occupies 37–314 (PRWLSTDLRD…DPQIDFSDID (278 aa)). Asp46, His253, His255, and Asn289 together coordinate Mg(2+). Residues 456–573 (NPDNPWGRIQ…VVSAVNRATR (118 aa)) form a regulatory domain region.

This sequence belongs to the alpha-IPM synthase/homocitrate synthase family. LeuA type 2 subfamily. Homodimer. Mg(2+) is required as a cofactor.

Its subcellular location is the cytoplasm. The catalysed reaction is 3-methyl-2-oxobutanoate + acetyl-CoA + H2O = (2S)-2-isopropylmalate + CoA + H(+). It participates in amino-acid biosynthesis; L-leucine biosynthesis; L-leucine from 3-methyl-2-oxobutanoate: step 1/4. Its function is as follows. Catalyzes the condensation of the acetyl group of acetyl-CoA with 3-methyl-2-oxobutanoate (2-ketoisovalerate) to form 3-carboxy-3-hydroxy-4-methylpentanoate (2-isopropylmalate). This is 2-isopropylmalate synthase from Streptomyces coelicolor (strain ATCC BAA-471 / A3(2) / M145).